The chain runs to 569 residues: Urease subunit alpha (569 aa).

Residues 131-569 enclose the Urease domain; it reads GGIDTHIHFI…LPLAQRYLLL (439 aa). The Ni(2+) site is built by H136, H138, and K219. Position 219 is an N6-carboxylysine (K219). Residue H221 participates in substrate binding. Ni(2+) contacts are provided by H248 and H274. H322 serves as the catalytic Proton donor. D362 provides a ligand contact to Ni(2+).

It belongs to the metallo-dependent hydrolases superfamily. Urease alpha subunit family. Heterotrimer of UreA (gamma), UreB (beta) and UreC (alpha) subunits. Three heterotrimers associate to form the active enzyme. The cofactor is Ni cation. Carboxylation allows a single lysine to coordinate two nickel ions.

The protein localises to the cytoplasm. It carries out the reaction urea + 2 H2O + H(+) = hydrogencarbonate + 2 NH4(+). It participates in nitrogen metabolism; urea degradation; CO(2) and NH(3) from urea (urease route): step 1/1. The polypeptide is Urease subunit alpha (Parasynechococcus marenigrum (strain WH8102)).